The chain runs to 118 residues: Na(+)/H(+) antiporter subunit G1 (118 aa).

The next 3 membrane-spanning stretches (helical) occupy residues 9-29, 41-61, and 70-90; these read IALILVIIGSLISALAAIGIL, AGKAATLGAMLLISGVFLFFI, and QLIVGILFILITGPLASHLII.

It belongs to the CPA3 antiporters (TC 2.A.63) subunit G family. May form a heterooligomeric complex that consists of seven subunits: mnhA1, mnhB1, mnhC1, mnhD1, mnhE1, mnhF1 and mnhG1.

It localises to the cell membrane. Mnh complex is a Na(+)/H(+) antiporter involved in Na(+) excretion. The sequence is that of Na(+)/H(+) antiporter subunit G1 (mnhG1) from Staphylococcus saprophyticus subsp. saprophyticus (strain ATCC 15305 / DSM 20229 / NCIMB 8711 / NCTC 7292 / S-41).